The chain runs to 90 residues: U7-theraphotoxin-Hhn1k (90 aa).

A signal peptide spans 1–19; the sequence is MKTAIFTVVLALAVFAVLS. The propeptide occupies 20–50; sequence FGWEANEKALSEEFTELIHEKEAASETEARE. Disulfide bonds link Cys51–Cys65 and Cys58–Cys70.

The protein belongs to the neurotoxin 10 (Hwtx-1) family. 13 (Hntx-13) subfamily. Expressed by the venom gland.

Its subcellular location is the secreted. In terms of biological role, ion channel inhibitor. This is U7-theraphotoxin-Hhn1k from Cyriopagopus hainanus (Chinese bird spider).